We begin with the raw amino-acid sequence, 95 residues long: MGPSRLVRGPRPQGMRSPYRRPGMGWPRPRFPRMFKCSRRRYQQGLRGRTASSAAINPATRAMGINNTHTDTTIVWIFPPQVLRHLRQPGIFLIL.

The interval 1 to 27 (MGPSRLVRGPRPQGMRSPYRRPGMGWP) is disordered.

This is PIK3R3 upstream open reading frame protein from Homo sapiens (Human).